The sequence spans 73 residues: Toxin Td9 (73 aa).

The signal sequence occupies residues 1 to 7; that stretch reads IGMVAEC. Positions 8–70 constitute an LCN-type CS-alpha/beta domain; it reads KDGYLVGDDG…IWNSATNSCG (63 aa). Intrachain disulfides connect C18-C69, C22-C44, C30-C50, and C34-C52. A Lysine amide modification is found at K71.

It belongs to the long (4 C-C) scorpion toxin superfamily. Sodium channel inhibitor family. Beta subfamily. Expressed by the venom gland.

It is found in the secreted. Its function is as follows. Beta toxins bind voltage-independently at site-4 of sodium channels (Nav) and shift the voltage of activation toward more negative potentials thereby affecting sodium channel activation and promoting spontaneous and repetitive firing. The chain is Toxin Td9 from Tityus discrepans (Venezuelan scorpion).